A 527-amino-acid chain; its full sequence is Putative ribose/galactose/methyl galactoside import ATP-binding protein 2 (527 aa).

The tract at residues 1-31 (MFTARVARPMAGDDAPAASSGSTGSSAPPAS) is disordered. Positions 12–31 (GDDAPAASSGSTGSSAPPAS) are enriched in low complexity. 2 consecutive ABC transporter domains span residues 38-274 (LEVR…VGRE) and 284-523 (VPIG…RIMD). 70–77 (GENGAGKS) contributes to the ATP binding site.

It belongs to the ABC transporter superfamily. Carbohydrate importer 2 (CUT2) (TC 3.A.1.2) family.

It is found in the cell inner membrane. The enzyme catalyses D-ribose(out) + ATP + H2O = D-ribose(in) + ADP + phosphate + H(+). It carries out the reaction D-galactose(out) + ATP + H2O = D-galactose(in) + ADP + phosphate + H(+). Functionally, part of an ABC transporter complex involved in carbohydrate import. Could be involved in ribose, galactose and/or methyl galactoside import. Responsible for energy coupling to the transport system. The protein is Putative ribose/galactose/methyl galactoside import ATP-binding protein 2 of Burkholderia lata (strain ATCC 17760 / DSM 23089 / LMG 22485 / NCIMB 9086 / R18194 / 383).